The sequence spans 457 residues: NAC domain-containing protein 69 (457 aa).

Residues Asp4–Lys153 enclose the NAC domain. A DNA-binding region spans residues Ile107–Val159. Disordered regions lie at residues Asp158–Val180 and Asp302–Gln332. Positions Gly162–Val180 are enriched in polar residues. A compositionally biased stretch (low complexity) spans Asp302 to Ser311. The span at Ala312–Gln332 shows a compositional bias: polar residues. The chain crosses the membrane as a helical span at residues Ile421–Ile441.

It is found in the membrane. The protein resides in the nucleus. Transcription activator activated by proteolytic cleavage through regulated intramembrane proteolysis (RIP). Involved in salt stress response during seed germination and seedling growth. Binds the auxin-responsive IAA30 gene promoter and may serve as a molecular link that interconnects a developmental feedback loop of auxin signaling with a salt signal transduction pathway during seed germination. The protein is NAC domain-containing protein 69 (NAC69) of Arabidopsis thaliana (Mouse-ear cress).